A 405-amino-acid polypeptide reads, in one-letter code: S-adenosylmethionine sensor upstream of mTORC1 (405 aa).

Residues 1 to 34 form a disordered region; that stretch reads MEPGAGGRNTARAQRAGSPNTPPPREQERKLEQE. The span at 25–34 shows a compositional bias: basic and acidic residues; sequence REQERKLEQE. S-adenosyl-L-methionine-binding residues include Arg-95, Gly-172, Asp-190, Asp-202, Phe-203, and Ser-244.

This sequence belongs to the BMT2/SAMTOR family. Interacts with the DEPDC5 subunit of the GATOR1 complex; interaction is disrupted when SAMTOR binds S-adenosyl-L-methionine. Interacts with the KICSTOR complex; interaction is disrupted when SAMTOR binds S-adenosyl-L-methionine.

In terms of biological role, S-adenosyl-L-methionine-binding protein that acts as an inhibitor of mTORC1 signaling via interaction with the GATOR1 and KICSTOR complexes. Acts as a sensor of S-adenosyl-L-methionine to signal methionine sufficiency to mTORC1: in presence of methionine, binds S-adenosyl-L-methionine, leading to disrupt interaction with the GATOR1 and KICSTOR complexes and promote mTORC1 signaling. Upon methionine starvation, S-adenosyl-L-methionine levels are reduced, thereby promoting the association with GATOR1 and KICSTOR, leading to inhibit mTORC1 signaling. Probably also acts as a S-adenosyl-L-methionine-dependent methyltransferase (Potential). This chain is S-adenosylmethionine sensor upstream of mTORC1, found in Homo sapiens (Human).